The following is a 453-amino-acid chain: Ribosomal protein uS12 methylthiotransferase RimO (453 aa).

Residues 5–120 form the MTTase N-terminal domain; that stretch reads PKVGFVSLGC…VMQAVHSHLP (116 aa). [4Fe-4S] cluster-binding residues include Cys-14, Cys-50, Cys-79, Cys-151, Cys-155, and Cys-158. Residues 137 to 383 enclose the Radical SAM core domain; it reads LTPRHYAYLK…EVAEEVSAHR (247 aa). The TRAM domain maps to 385–453; that stretch reads QRKVGKTLKV…ADGHDLWGEV (69 aa).

This sequence belongs to the methylthiotransferase family. RimO subfamily. The cofactor is [4Fe-4S] cluster.

It is found in the cytoplasm. The catalysed reaction is L-aspartate(89)-[ribosomal protein uS12]-hydrogen + (sulfur carrier)-SH + AH2 + 2 S-adenosyl-L-methionine = 3-methylsulfanyl-L-aspartate(89)-[ribosomal protein uS12]-hydrogen + (sulfur carrier)-H + 5'-deoxyadenosine + L-methionine + A + S-adenosyl-L-homocysteine + 2 H(+). Functionally, catalyzes the methylthiolation of an aspartic acid residue of ribosomal protein uS12. The protein is Ribosomal protein uS12 methylthiotransferase RimO of Burkholderia cenocepacia (strain ATCC BAA-245 / DSM 16553 / LMG 16656 / NCTC 13227 / J2315 / CF5610) (Burkholderia cepacia (strain J2315)).